A 70-amino-acid polypeptide reads, in one-letter code: Dermaseptin-H3 (70 aa).

The N-terminal stretch at M1–C22 is a signal peptide. A propeptide spanning residues E23–M43 is cleaved from the precursor. A disordered region spans residues E25–K44. The segment covering E30–Q40 has biased composition (acidic residues). The residue at position 70 (L70) is a Leucine amide.

Expressed by the skin glands.

It is found in the secreted. In terms of biological role, has antibacterial activity against the Gram-negative bacteria E.coli and P.aeruginosa, and the Gram-positive bacteria S.aureus and M.luteus. Has antiprotozoal activity against L.amazonensis. No hemolytic activity. The polypeptide is Dermaseptin-H3 (Pithecopus hypochondrialis (Orange-legged leaf frog)).